The chain runs to 435 residues: Chromosomal replication initiator protein DnaA (435 aa).

Residues 1 to 70 (MNIGEKILLL…KHLFEIQNSI (70 aa)) are domain I, interacts with DnaA modulators. Residues 70–98 (IKVDVSILLKNQVESKKAEQKSVQKQQHS) form a domain II region. Positions 99–313 (LLNPSHTFEN…GILSKLHAYS (215 aa)) are domain III, AAA+ region. ATP contacts are provided by G143, G145, K146, and T147. The interval 314–435 (QLMHVDIDLQ…ELTNKITSSS (122 aa)) is domain IV, binds dsDNA.

Belongs to the DnaA family. In terms of assembly, oligomerizes as a right-handed, spiral filament on DNA at oriC.

Its subcellular location is the cytoplasm. Functionally, plays an essential role in the initiation and regulation of chromosomal replication. ATP-DnaA binds to the origin of replication (oriC) to initiate formation of the DNA replication initiation complex once per cell cycle. Binds the DnaA box (a 9 base pair repeat at the origin) and separates the double-stranded (ds)DNA. Forms a right-handed helical filament on oriC DNA; dsDNA binds to the exterior of the filament while single-stranded (ss)DNA is stabiized in the filament's interior. The ATP-DnaA-oriC complex binds and stabilizes one strand of the AT-rich DNA unwinding element (DUE), permitting loading of DNA polymerase. After initiation quickly degrades to an ADP-DnaA complex that is not apt for DNA replication. Binds acidic phospholipids. The protein is Chromosomal replication initiator protein DnaA of Sulfurimonas denitrificans (strain ATCC 33889 / DSM 1251) (Thiomicrospira denitrificans (strain ATCC 33889 / DSM 1251)).